A 357-amino-acid polypeptide reads, in one-letter code: Probable leucine aminopeptidase TRV_02148.1 (357 aa).

The first 15 residues, Met1–Ala15, serve as a signal peptide directing secretion. N-linked (GlcNAc...) asparagine glycosylation is present at Asn76. His167 and Asp185 together coordinate Zn(2+). The interval Asp169 to Ser188 is disordered. N-linked (GlcNAc...) asparagine glycosylation occurs at Asn186. 2 residues coordinate Zn(2+): Glu224 and Asp251. N-linked (GlcNAc...) asparagine glycosylation occurs at Asn269. Cysteines 291 and 295 form a disulfide. His324 contributes to the Zn(2+) binding site.

Belongs to the peptidase M28 family. M28E subfamily. As to quaternary structure, monomer. Zn(2+) serves as cofactor.

Its subcellular location is the secreted. Probable extracellular aminopeptidase which contributes to pathogenicity. This Trichophyton verrucosum (strain HKI 0517) protein is Probable leucine aminopeptidase TRV_02148.1.